A 417-amino-acid chain; its full sequence is Serine hydroxymethyltransferase (417 aa).

Lysine 54 bears the N6-acetyllysine mark. (6S)-5,6,7,8-tetrahydrofolate-binding positions include leucine 121 and glycine 125–leucine 127. Position 229 is an N6-(pyridoxal phosphate)lysine (lysine 229). An N6-acetyllysine mark is found at lysine 250, lysine 285, and lysine 354. A (6S)-5,6,7,8-tetrahydrofolate-binding site is contributed by serine 355–phenylalanine 357. Residue lysine 375 is modified to N6-acetyllysine.

It belongs to the SHMT family. Homodimer. Pyridoxal 5'-phosphate serves as cofactor.

Its subcellular location is the cytoplasm. It carries out the reaction (6R)-5,10-methylene-5,6,7,8-tetrahydrofolate + glycine + H2O = (6S)-5,6,7,8-tetrahydrofolate + L-serine. The protein operates within one-carbon metabolism; tetrahydrofolate interconversion. It functions in the pathway amino-acid biosynthesis; glycine biosynthesis; glycine from L-serine: step 1/1. Catalyzes the reversible interconversion of serine and glycine with tetrahydrofolate (THF) serving as the one-carbon carrier. This reaction serves as the major source of one-carbon groups required for the biosynthesis of purines, thymidylate, methionine, and other important biomolecules. Also exhibits THF-independent aldolase activity toward beta-hydroxyamino acids, producing glycine and aldehydes, via a retro-aldol mechanism. The polypeptide is Serine hydroxymethyltransferase (Shigella dysenteriae serotype 1 (strain Sd197)).